We begin with the raw amino-acid sequence, 229 residues long: MDKKELVEKIALNTLVFETLGQPEKEREFTIQDLRRWGFDLILGKKNGVRTFFASQAGREVGDKWEEGGATYEIEEILLELPENKKLFAHIETSEGVAYIVAELREGKENLEILRTPAPTLLMAFFKKHRLHELANNLKSVGVITEFYKQRGRESLPLPYKKLPLVARDFLERAKKVEKMAGFGRVALAYFGKTREKDNRFRVSWLLPTIALFDIDISEKANTALEEFK.

Belongs to the UPF0128 family.

The sequence is that of UPF0128 protein aq_756 from Aquifex aeolicus (strain VF5).